A 166-amino-acid chain; its full sequence is Large ribosomal subunit protein uL10 (166 aa).

This sequence belongs to the universal ribosomal protein uL10 family. In terms of assembly, part of the ribosomal stalk of the 50S ribosomal subunit. The N-terminus interacts with L11 and the large rRNA to form the base of the stalk. The C-terminus forms an elongated spine to which L12 dimers bind in a sequential fashion forming a multimeric L10(L12)X complex.

Functionally, forms part of the ribosomal stalk, playing a central role in the interaction of the ribosome with GTP-bound translation factors. The polypeptide is Large ribosomal subunit protein uL10 (Bacillus mycoides (strain KBAB4) (Bacillus weihenstephanensis)).